Consider the following 2465-residue polypeptide: Highly reducing polyketide synthase milA (2465 aa).

One can recognise a Ketosynthase family 3 (KS3) domain in the interval methionine 1–glycine 434. Catalysis depends on for beta-ketoacyl synthase activity residues cysteine 172, histidine 311, and histidine 355. The interval lysine 450 to leucine 476 is disordered. Residues proline 451 to serine 463 show a composition bias toward low complexity. A malonyl-CoA:ACP transacylase (MAT) domain region spans residues valine 567 to aspartate 888. Residues histidine 957–aspartate 1096 form an N-terminal hotdog fold region. The interval histidine 957 to threonine 1265 is dehydratase (DH) domain. Residues histidine 957–aspartate 1267 form the PKS/mFAS DH domain. Histidine 989 (proton acceptor; for dehydratase activity) is an active-site residue. Residues leucine 1111–aspartate 1267 are C-terminal hotdog fold. The active-site Proton donor; for dehydratase activity is the aspartate 1174. The segment at histidine 1334–valine 1367 is disordered. Residues threonine 2095 to valine 2269 form a ketoreductase (KR)domain region. In terms of domain architecture, Carrier spans aspartate 2384–isoleucine 2459. Residue serine 2419 is modified to O-(pantetheine 4'-phosphoryl)serine.

Pantetheine 4'-phosphate serves as cofactor.

The enzyme catalyses 10 malonyl-CoA + acetyl-CoA + 3 AH2 + 8 NADPH + 18 H(+) = cordypyrone A + 3 A + 10 CO2 + 8 NADP(+) + 11 CoA + 8 H2O. The protein operates within secondary metabolite biosynthesis. Functionally, highly reducing polyketide synthase (HR-PKS); part of the gene cluster that mediates the biosynthesis of cordypyrones A and B, 2 pyrones that show modest activities against pathogenic bacteria including methicillin-resistant Staphylococcus aureus (MRSA), Mycobacterium tuberculosis and Bacillus cereus. The HR-PKS milA catalyzes the formation of cordypyrones A via condensation of one acetate with 10 malonate units. Since milA lacks an enoyl reductase domain, the 2 beta-keto processing domains DH and KR of milA collaborate with the trans-enoyl reductase milB to catalyze the different levels of reduction. The cytochrome P450 monooxygenase milC then hydroxylates the C-22 of cordypyrones A to yield cordypyrones B. This Cordyceps militaris (strain CM01) (Caterpillar fungus) protein is Highly reducing polyketide synthase milA.